The chain runs to 121 residues: Neuromedin-B (121 aa).

The N-terminal stretch at M1–V24 is a signal peptide. M56 bears the Methionine amide mark. A propeptide spanning residues S60–K121 is cleaved from the precursor.

The protein belongs to the bombesin/neuromedin-B/ranatensin family.

Its subcellular location is the secreted. It localises to the cell projection. The protein resides in the neuron projection. Its function is as follows. Stimulates smooth muscle contraction. Induces sighing by acting directly on the pre-Botzinger complex, a cluster of several thousand neurons in the ventrolateral medulla responsible for inspiration during respiratory activity. Contributes to the induction of sneezing following exposure to chemical irritants or allergens which causes release of NMB by nasal sensory neurons and activation of NMBR-expressing neurons in the sneeze-evoking region of the brainstem. These in turn activate neurons of the caudal ventral respiratory group, giving rise to the sneezing response. Contributes to induction of acute itch, possibly through activation of the NMBR receptor on dorsal root ganglion neurons. Increases expression of NMBR and steroidogenic mediators STAR, CYP11A1 and HSD3B1 in Leydig cells, induces secretion of testosterone by Leydig cells and also promotes Leydig cell proliferation. Plays a role in the innate immune response to influenza A virus infection by enhancing interferon alpha expression and reducing expression of IL6. Plays a role in CSF1-induced proliferation of osteoclast precursors by contributing to the positive regulation of the expression of the CSF1 receptor CSF1R. The protein is Neuromedin-B (NMB) of Homo sapiens (Human).